The sequence spans 122 residues: Large ribosomal subunit protein uL24 (122 aa).

This sequence belongs to the universal ribosomal protein uL24 family. As to quaternary structure, part of the 50S ribosomal subunit.

Its function is as follows. One of two assembly initiator proteins, it binds directly to the 5'-end of the 23S rRNA, where it nucleates assembly of the 50S subunit. In terms of biological role, located at the polypeptide exit tunnel on the outside of the subunit. The sequence is that of Large ribosomal subunit protein uL24 from Methanosarcina mazei (strain ATCC BAA-159 / DSM 3647 / Goe1 / Go1 / JCM 11833 / OCM 88) (Methanosarcina frisia).